Here is a 383-residue protein sequence, read N- to C-terminus: MVVTFLQDLEVLQDALLNNLQKLSAISRRKESGESKHDNKDSFAAIANEHNDEEEEIEFEDLVNIIESKVSDFESVLKCSIVEMTYKYPELKLQWEKSPRYDQCDKLHIVKLDKQMNEDIYAQLVEELDFVLQFVDWFYCYRLKVKEILRQHHKRDLAWNDEKRDRAIKFHAVDYDKLHQGTSSSSSLTSTSMEKASTREKLLSKTKQLTNNLVRGNQILQSGILQSDLNLDELRAQTNSLTQIDDKYTQFETVFKKTADLVKVLENASHQEKRDVYLSLGFLLCCVSWVLWRRIFKLPVKLGLWLLFKFFKGILVTLGLVKSYAGSSSSLQAPSLVLNAPILATTTTSSATSVEPFASVSAVSSIQRAVDEAVDRIVSHDEL.

Residues Met-1–Asp-275 lie on the Cytoplasmic side of the membrane. Positions Leu-6–Ile-26 form a coiled coil. Residues Val-276 to Trp-292 form a helical; Anchor for type IV membrane protein membrane-spanning segment. Residues Arg-293–Leu-383 lie on the Lumenal side of the membrane. A Prevents secretion from ER motif is present at residues His-380–Leu-383.

The protein belongs to the SEC20 family. In terms of assembly, component of a SNARE complex consisting of UFE1, USE1, SEC20 and SEC22 or YKT6. Interacts with TIP20 through its cytoplasmic domain. Post-translationally, O-glycosylated, but not N-glycosylated.

Its subcellular location is the endoplasmic reticulum membrane. SNARE required for targeting and fusion of Golgi-derived retrograde transport vesicles with the ER. The polypeptide is Protein transport protein SEC20 (SEC20) (Saccharomyces cerevisiae (strain ATCC 204508 / S288c) (Baker's yeast)).